A 343-amino-acid chain; its full sequence is Phenylalanine--tRNA ligase alpha subunit (343 aa).

Glu268 serves as a coordination point for Mg(2+).

Belongs to the class-II aminoacyl-tRNA synthetase family. Phe-tRNA synthetase alpha subunit type 1 subfamily. As to quaternary structure, tetramer of two alpha and two beta subunits. The cofactor is Mg(2+).

The protein localises to the cytoplasm. The catalysed reaction is tRNA(Phe) + L-phenylalanine + ATP = L-phenylalanyl-tRNA(Phe) + AMP + diphosphate + H(+). The chain is Phenylalanine--tRNA ligase alpha subunit from Cupriavidus necator (strain ATCC 17699 / DSM 428 / KCTC 22496 / NCIMB 10442 / H16 / Stanier 337) (Ralstonia eutropha).